The following is a 261-amino-acid chain: CD40 ligand (261 aa).

Residues 1–22 are Cytoplasmic-facing; the sequence is MIETYNQPSPRSAATGLPVRMK. Residues 23–43 form a helical; Signal-anchor for type II membrane protein membrane-spanning segment; it reads IFMYLLTIFLITQMIGSALFA. Residues 44–261 are Extracellular-facing; sequence VYLHRRLDKI…GFTSFGLLKL (218 aa). The 140-residue stretch at 122–261 folds into the THD domain; the sequence is IAAHVISEAS…GFTSFGLLKL (140 aa). Cys-178 and Cys-218 form a disulfide bridge. Residue Asn-240 is glycosylated (N-linked (GlcNAc...) asparagine).

This sequence belongs to the tumor necrosis factor family. As to quaternary structure, homotrimer. Interacts with CD28. CD40 ligand, soluble form: Exists as either a monomer or a homotrimer. Forms a ternary complex between CD40 and integrins for CD40-CD40LG signaling. In terms of processing, the soluble form derives from the membrane form by proteolytic processing.

It localises to the cell membrane. It is found in the cell surface. The protein localises to the secreted. Functionally, cytokine that acts as a ligand to CD40/TNFRSF5. Costimulates T-cell proliferation and cytokine production. Its cross-linking on T-cells generates a costimulatory signal which enhances the production of IL4 and IL10 in conjunction with the TCR/CD3 ligation and CD28 costimulation. Induces the activation of NF-kappa-B. Induces the activation of kinases MAPK8 and PAK2 in T-cells. Mediates B-cell proliferation in the absence of co-stimulus as well as IgE production in the presence of IL4. Involved in immunoglobulin class switching. Acts as a ligand for integrins, specifically ITGA5:ITGB1 and ITGAV:ITGB3; both integrins and the CD40 receptor are required for activation of CD40-CD40LG signaling, which have cell-type dependent effects, such as B-cell activation, NF-kappa-B signaling and anti-apoptotic signaling. This Cercocebus atys (Sooty mangabey) protein is CD40 ligand (CD40LG).